The primary structure comprises 459 residues: Cysteine--tRNA ligase (459 aa).

Cys-29 lines the Zn(2+) pocket. The 'HIGH' region motif lies at 31 to 41 (PTVYDRAHIGN). Zn(2+)-binding residues include Cys-209, His-234, and Glu-238. The 'KMSKS' region motif lies at 266–270 (KMSKS). Lys-269 lines the ATP pocket.

This sequence belongs to the class-I aminoacyl-tRNA synthetase family. As to quaternary structure, monomer. Requires Zn(2+) as cofactor.

Its subcellular location is the cytoplasm. It carries out the reaction tRNA(Cys) + L-cysteine + ATP = L-cysteinyl-tRNA(Cys) + AMP + diphosphate. The chain is Cysteine--tRNA ligase from Paramagnetospirillum magneticum (strain ATCC 700264 / AMB-1) (Magnetospirillum magneticum).